Reading from the N-terminus, the 962-residue chain is Glycine dehydrogenase (decarboxylating) (962 aa).

Lys709 is subject to N6-(pyridoxal phosphate)lysine.

This sequence belongs to the GcvP family. In terms of assembly, the glycine cleavage system is composed of four proteins: P, T, L and H. The cofactor is pyridoxal 5'-phosphate.

The catalysed reaction is N(6)-[(R)-lipoyl]-L-lysyl-[glycine-cleavage complex H protein] + glycine + H(+) = N(6)-[(R)-S(8)-aminomethyldihydrolipoyl]-L-lysyl-[glycine-cleavage complex H protein] + CO2. Its function is as follows. The glycine cleavage system catalyzes the degradation of glycine. The P protein binds the alpha-amino group of glycine through its pyridoxal phosphate cofactor; CO(2) is released and the remaining methylamine moiety is then transferred to the lipoamide cofactor of the H protein. The sequence is that of Glycine dehydrogenase (decarboxylating) from Shewanella baltica (strain OS155 / ATCC BAA-1091).